A 1459-amino-acid polypeptide reads, in one-letter code: ARF guanine-nucleotide exchange factor 2 (1459 aa).

Phosphoserine occurs at positions 46 and 284. Residues 570–714 (FNEKPKKGIP…IIMLNTDLHN (145 aa)) form the SEC7 domain. Positions 1412–1459 (EKGNGSSSHGSAHEQTPESNDVEIEATAPIDDNTDDDNKPKLSDVEKD) are disordered. The span at 1447–1459 (DDNKPKLSDVEKD) shows a compositional bias: basic and acidic residues.

In terms of assembly, interacts (via SEC7 domain) with DRS2 (via C-terminus); the interaction is direct. Interacts with GMH1.

It is found in the cytoplasm. The protein localises to the cytosol. Its subcellular location is the membrane. The protein resides in the golgi apparatus membrane. In terms of biological role, activates the ARF proteins by exchanging bound GDP for free GTP. Plays a role in maintaining mitochondrial morphology. Stimulates DRS2 flippase activity. This is ARF guanine-nucleotide exchange factor 2 (GEA2) from Saccharomyces cerevisiae (strain ATCC 204508 / S288c) (Baker's yeast).